A 331-amino-acid polypeptide reads, in one-letter code: Glyceraldehyde-3-phosphate dehydrogenase (331 aa).

Residues 11–12 (RI), Asp33, and Arg78 contribute to the NAD(+) site. Residues 148–150 (SCT), Thr179, 208–209 (TG), and Arg231 contribute to the D-glyceraldehyde 3-phosphate site. Cys149 (nucleophile) is an active-site residue. NAD(+) is bound at residue Asn313.

This sequence belongs to the glyceraldehyde-3-phosphate dehydrogenase family. Homotetramer.

It localises to the cytoplasm. The catalysed reaction is D-glyceraldehyde 3-phosphate + phosphate + NAD(+) = (2R)-3-phospho-glyceroyl phosphate + NADH + H(+). Its pathway is carbohydrate degradation; glycolysis; pyruvate from D-glyceraldehyde 3-phosphate: step 1/5. The polypeptide is Glyceraldehyde-3-phosphate dehydrogenase (GPD) (Eremothecium gossypii (strain ATCC 10895 / CBS 109.51 / FGSC 9923 / NRRL Y-1056) (Yeast)).